A 462-amino-acid chain; its full sequence is MRRKAVLLTVVLSLSGGSAQAMGLLDAWELALRNDAQLRAAGFERDAGQEEVAIGRAGLLPSLQYTYGANYSHSKVTQRDRTLNNTTKRDYDNYVSTLTLRQPLLDYAAWARYQQGVTRKLMADQRFRDRSQDLMVRLYQSWSEALLAQEKLMLLDAQRRAYQEQLALNRRLLAAGEGTQTDLRETEARYTVTEAQRIEQEDTLDAAMTDLENMMGSPLQIQDLSPLALDTLPDNVTENRSLSQWRELTVRHNAKLAVQRENVDYSRYEIERNRAGHLPTLDLVASTRNSLSESEYNYNQKYDTQTVGLQVRVPLYSGGAVSASMRQAAAEYQQSQAELDNQTRQTFAELRRQFNLCANGAAKIRAWQMSVAAAEEAIRATRQSVAGGERINLDVLMAEQEWYNARRELTEVKYRWLQAWLNLRYTAGTLNEQDMMQLAAWFQSAPVINKTGINAATGNKTN.

Residues 1 to 23 (MRRKAVLLTVVLSLSGGSAQAMG) form the signal peptide.

It belongs to the outer membrane factor (OMF) (TC 1.B.17) family.

The protein resides in the cell outer membrane. Functionally, involved in the secretion of proteases A, B, C and G. The chain is Proteases secretion protein PrtF (prtF) from Dickeya chrysanthemi (Pectobacterium chrysanthemi).